A 452-amino-acid polypeptide reads, in one-letter code: UPF0210 protein Daud_1353 (452 aa).

Belongs to the UPF0210 family. As to quaternary structure, homodimer.

The chain is UPF0210 protein Daud_1353 from Desulforudis audaxviator (strain MP104C).